Reading from the N-terminus, the 265-residue chain is Metal-activated transcriptional activator protein AMT1 (265 aa).

Residues 1–40 (MVVINGVKYACDSCIKSHKAAQCEHNDRPLKILKPRGRPP) constitute a DNA-binding region (copper-fist). Positions 11, 14, 23, and 25 each coordinate Zn(2+). The tract at residues 103–129 (RRKRTQKSNKKDNLSINSPTNNSPSPA) is disordered. The span at 119-128 (NSPTNNSPSP) shows a compositional bias: low complexity.

Its subcellular location is the nucleus. In terms of biological role, trans-acting regulatory protein that activates transcription of the MT genes (metallothionein) in response to copper or silver ions. In Candida glabrata (strain ATCC 2001 / BCRC 20586 / JCM 3761 / NBRC 0622 / NRRL Y-65 / CBS 138) (Yeast), this protein is Metal-activated transcriptional activator protein AMT1 (AMT1).